The primary structure comprises 276 residues: 4-deoxy-L-threo-5-hexosulose-uronate ketol-isomerase 1 (276 aa).

Residues His-194, His-196, Glu-201, and His-243 each coordinate Zn(2+).

This sequence belongs to the KduI family. Zn(2+) serves as cofactor.

It carries out the reaction 5-dehydro-4-deoxy-D-glucuronate = 3-deoxy-D-glycero-2,5-hexodiulosonate. Its pathway is glycan metabolism; pectin degradation; 2-dehydro-3-deoxy-D-gluconate from pectin: step 4/5. In terms of biological role, catalyzes the isomerization of 5-dehydro-4-deoxy-D-glucuronate to 3-deoxy-D-glycero-2,5-hexodiulosonate. This Enterococcus faecalis (strain ATCC 700802 / V583) protein is 4-deoxy-L-threo-5-hexosulose-uronate ketol-isomerase 1 (kduI1).